The following is an 84-amino-acid chain: Chymotrypsin inhibitor Ani s 6 (84 aa).

Residues 1–22 form the signal peptide; the sequence is MFQSTFFLVLMVCVATARFANK. 5 disulfide bridges follow: cysteine 25–cysteine 58, cysteine 34–cysteine 54, cysteine 38–cysteine 50, cysteine 42–cysteine 79, and cysteine 60–cysteine 73. Residues 25–79 form the TIL domain; it reads CPPNEEYNECGNPCQEKCDNGEPVICTYQCEHRCFCKQGYVRLTEDGECVPEEFC.

It belongs to the serine protease inhibitor-like (TIL domain-containing) family.

It is found in the secreted. Its function is as follows. Inhibits alpha-chymotrypsin, but not trypsin. The chain is Chymotrypsin inhibitor Ani s 6 from Anisakis simplex (Herring worm).